The chain runs to 311 residues: Putative mitochondrial transporter UCP3 (311 aa).

The Mitochondrial intermembrane segment spans residues 1–10; the sequence is MVGLKPSEVP. The helical transmembrane segment at 11 to 32 threads the bilayer; the sequence is PTTAVKFLGAGTAACFADLLTF. Solcar repeat units follow at residues 11–105, 114–205, and 214–299; these read PTTA…VKQF, SSIT…IKEK, and DNFP…LKRA. Residues 33–76 lie on the Mitochondrial matrix side of the membrane; the sequence is PLDTAKVRLQIQGENQATQAARRIQYRGVLGTILTMVRTEGPRS. A helical transmembrane segment spans residues 77 to 99; that stretch reads PYNGLVAGLQRQMSFASIRIGLY. The Mitochondrial intermembrane segment spans residues 100–119; it reads DSVKQFYTPKGSDHSSITTR. A helical membrane pass occupies residues 120-136; sequence ILAGCTTGAMAVSCAQP. Topologically, residues 137–182 are mitochondrial matrix; the sequence is TDVVKVRFQASIHLGAGSNRKYSGTMDAYRTIAREEGVRGLWKGTL. Residues 183–199 traverse the membrane as a helical segment; that stretch reads PNITRNAIVNCAEMVTY. Topologically, residues 200–216 are mitochondrial intermembrane; that stretch reads DIIKEKLLDYHLLTDNF. A helical transmembrane segment spans residues 217–236; sequence PCHLISAFGAGFCATVVASP. Residues 237-270 are Mitochondrial matrix-facing; sequence VDVVKTRYMNSPPGQYCSPLDCMLKMVTQEGPTA. The helical transmembrane segment at 271-293 threads the bilayer; it reads FYKGFTPSFLRLGTWNVVMFVTY. The tract at residues 278–300 is purine nucleotide binding; the sequence is SFLRLGTWNVVMFVTYEQLKRAL. Residues 294–311 are Mitochondrial intermembrane-facing; sequence EQLKRALMKVQMLRESPF.

This sequence belongs to the mitochondrial carrier (TC 2.A.29) family. Interacts with HAX1; the interaction is direct and calcium-dependent.

It is found in the mitochondrion inner membrane. In terms of biological role, putative transmembrane transporter that plays a role in mitochondrial metabolism via an as yet unclear mechanism. Originally, this mitochondrial protein was thought to act as a proton transmembrane transporter from the mitochondrial intermembrane space into the matrix, causing proton leaks through the inner mitochondrial membrane, thereby uncoupling mitochondrial membrane potential generation from ATP synthesis. However, this function is controversial and uncoupling may not be the function, or at least not the main function, but rather a consequence of more conventional metabolite transporter activity. This is Putative mitochondrial transporter UCP3 from Canis lupus familiaris (Dog).